Reading from the N-terminus, the 136-residue chain is MSLIVYFSSRSENTHRFVQRLGLPAVRIPLNEREHLQVDEPYILIVPSYGGGGTAGAVPRQAICFLNDVHNRQLIRGVIAAGNRNFGDAWGRAGEVIAQKCAVPYLYRFELMGTPDDIDNVRKGVSEFWQRQPQNV.

This sequence belongs to the NrdI family.

Its function is as follows. Probably involved in ribonucleotide reductase function. The chain is Protein NrdI from Klebsiella pneumoniae (strain 342).